The following is a 126-amino-acid chain: Methylglyoxal synthase (126 aa).

One can recognise an MGS-like domain in the interval 1–126 (MEKKIALIAH…LIKGLESLIF (126 aa)). Substrate contacts are provided by residues His10, Lys14, 36–39 (TGTT), and 56–57 (SG). Asp62 (proton donor/acceptor) is an active-site residue. His89 lines the substrate pocket.

This sequence belongs to the methylglyoxal synthase family.

The catalysed reaction is dihydroxyacetone phosphate = methylglyoxal + phosphate. In terms of biological role, catalyzes the formation of methylglyoxal from dihydroxyacetone phosphate. In Borreliella burgdorferi (strain ATCC 35210 / DSM 4680 / CIP 102532 / B31) (Borrelia burgdorferi), this protein is Methylglyoxal synthase.